The primary structure comprises 188 residues: Der GTPase-activating protein YihI (188 aa).

2 disordered regions span residues 1–80 and 162–188; these read MKQP…VPVP and DEDDVEREEKQEDILQLLKRGNPKDTF. Residues 27 to 37 are compositionally biased toward basic and acidic residues; sequence TRDELDAEARD. Over residues 47 to 57 the composition is skewed to polar residues; the sequence is NRSGARTNVEG.

It belongs to the YihI family. As to quaternary structure, interacts with Der.

In terms of biological role, a GTPase-activating protein (GAP) that modifies Der/EngA GTPase function. May play a role in ribosome biogenesis. This is Der GTPase-activating protein YihI from Yersinia pseudotuberculosis serotype O:3 (strain YPIII).